The chain runs to 159 residues: Large ribosomal subunit protein uL15 (159 aa).

The segment at Met1–Asn39 is disordered. Residues Arg21–Val35 show a composition bias toward gly residues.

It belongs to the universal ribosomal protein uL15 family. In terms of assembly, part of the 50S ribosomal subunit.

In terms of biological role, binds to the 23S rRNA. The protein is Large ribosomal subunit protein uL15 of Hyphomonas neptunium (strain ATCC 15444).